Here is a 389-residue protein sequence, read N- to C-terminus: Spore coat polysaccharide biosynthesis protein SpsC (389 aa).

Lysine 187 carries the N6-(pyridoxal phosphate)lysine modification.

This sequence belongs to the DegT/DnrJ/EryC1 family. Pyridoxal 5'-phosphate is required as a cofactor.

Its pathway is spore coat biogenesis; spore coat polysaccharide biosynthesis. This is Spore coat polysaccharide biosynthesis protein SpsC (spsC) from Bacillus subtilis (strain 168).